The following is a 66-amino-acid chain: MRARELRAQTLDQMKDELAKLKKEQFNLRFQKATGQLEKTARVRQVRRDIARIKTFLHQKLSESKV.

Belongs to the universal ribosomal protein uL29 family.

This is Large ribosomal subunit protein uL29 from Bartonella tribocorum (strain CIP 105476 / IBS 506).